The primary structure comprises 203 residues: Phosphatidylethanolamine N-methyltransferase (203 aa).

The enzyme catalyses a 1,2-diacyl-sn-glycero-3-phosphoethanolamine + S-adenosyl-L-methionine = a 1,2-diacyl-sn-glycero-3-phospho-N-methylethanolamine + S-adenosyl-L-homocysteine + H(+). Its pathway is phospholipid metabolism; phosphatidylcholine biosynthesis. In terms of biological role, this enzyme catalyzes three distinct methylation reactions for converting phosphatidylethanolamine to phosphatidylcholine. The sequence is that of Phosphatidylethanolamine N-methyltransferase (pmtA) from Cereibacter sphaeroides (Rhodobacter sphaeroides).